A 456-amino-acid chain; its full sequence is Equilibrative nucleoside transporter 1 (456 aa).

At 2 to 12 the chain is on the cytoplasmic side; that stretch reads TTSHQPQDRYK. The helical transmembrane segment at 13-29 threads the bilayer; the sequence is AVWLIFFMLGLGTLLPW. Over 30 to 82 the chain is Extracellular; it reads NFFMTATQYFTNRLDMSQNVSLVTAELSKDAQASAAPAAPLPERNSLSAIFNN. A glycan (N-linked (GlcNAc...) asparagine) is linked at Asn48. Residues 83–107 form a helical membrane-spanning segment; sequence VMTLCAMLPLLLFTYLNSFLHQRIP. Over 108–111 the chain is Cytoplasmic; that stretch reads QSVR. Residues 112–130 traverse the membrane as a helical segment; that stretch reads ILGSLVAILLVFLITAILV. Over 131-138 the chain is Extracellular; it reads KVQLDALP. The helical transmembrane segment at 139–157 threads the bilayer; that stretch reads FFVITMIKIVLINSFGAIL. The Cytoplasmic segment spans residues 158 to 174; it reads QGSLFGLAGLLPASYTA. The helical transmembrane segment at 175–199 threads the bilayer; that stretch reads PIMSGQGLAGFFASVAMICAIASGS. Residues 200–206 are Extracellular-facing; it reads ELSESAF. A helical membrane pass occupies residues 207 to 227; the sequence is GYFITACAVIILTIICYLGLP. Residues 228–291 are Cytoplasmic-facing; sequence RLEFYRYYQQ…IKAILKNISV (64 aa). A phosphoserine mark is found at Ser254, Ser269, and Ser273. Residues 254 to 266 show a composition bias toward basic and acidic residues; sequence SKGEEPRAGKEES. The interval 254-276 is disordered; the sequence is SKGEEPRAGKEESGVSVSNSQPT. A helical membrane pass occupies residues 292-311; it reads LAFSVCFIFTITIGMFPAVT. Over 312–323 the chain is Extracellular; the sequence is VEVKSSIAGSST. A helical membrane pass occupies residues 324–342; it reads WERYFIPVSCFLTFNIFDW. Residues 343–359 are Cytoplasmic-facing; that stretch reads LGRSLTAVFMWPGKDSR. Residues 360–378 form a helical membrane-spanning segment; it reads WLPSLVLARLVFVPLLLLC. Topologically, residues 379–393 are extracellular; that stretch reads NIKPRRYLTVVFEHD. The chain crosses the membrane as a helical span at residues 394–413; the sequence is AWFIFFMAAFAFSNGYLASL. The Cytoplasmic portion of the chain corresponds to 414–431; the sequence is CMCFGPKKVKPAEAETAG. Residues 432–452 traverse the membrane as a helical segment; that stretch reads AIMAFFLCLGLALGAVFSFLF. Residues 453 to 456 lie on the Extracellular side of the membrane; that stretch reads RAIV.

The protein belongs to the SLC29A/ENT transporter (TC 2.A.57) family. As to quaternary structure, identified in a complex with STOM. Post-translationally, glycosylated. As to expression, expressed in testis at the blood-testis barrier (at protein level). Detected in erythrocytes (at protein level). Expressed at relatively high levels in cerebral cortex, particularly the frontal and parietal lobes, and the thalamus and basal ganglia (at protein level). In the midbrain expressed at moderate levels, whereas in the other areas of the brainstem, namely medulla and pons, cerebellum and the hippocampus expressed at lower amounts when compared to the other brain regions (at protein level). Expressed in Langerhans cells and lymphocytes in the pancreas (at protein level). Expressed in kidney, in polarized renal epithelial cells. Expressed in adipose tissues. Expressed in placenta. Expressed in small intestine.

The protein resides in the basolateral cell membrane. It is found in the apical cell membrane. The protein localises to the cell membrane. The catalysed reaction is adenosine(in) = adenosine(out). It carries out the reaction guanosine(in) = guanosine(out). It catalyses the reaction inosine(in) = inosine(out). The enzyme catalyses uridine(out) = uridine(in). The catalysed reaction is thymidine(in) = thymidine(out). It carries out the reaction cytidine(in) = cytidine(out). It catalyses the reaction adenine(out) = adenine(in). The enzyme catalyses guanine(out) = guanine(in). The catalysed reaction is thymine(out) = thymine(in). It carries out the reaction uracil(in) = uracil(out). It catalyses the reaction hypoxanthine(out) = hypoxanthine(in). Transporter activity is sensitive to low concentrations of the inhibitor nitrobenzylmercaptopurine riboside (NBMPR). Inhibited by dilazep. Inhibited by dipyridamole. Inhibited by hypoxanthine. Inhibited by azidothymidine (AZT). Inhibited by dideoxycytidine (ddC). Inhibited by dideoxyinosine (ddI). Inhibited by draflazine. Inhibited by soluflazine. Inhibited by cladribine. Inhibited by capecitabine. Inhibited by clofarabine. Inhibited by ribavirin. Modestly inhibited by acyclovir. Modestly inhibited by 5-fluorouracil. Uniporter involved in the facilitative transport of nucleosides and nucleobases, and contributes to maintaining their cellular homeostasis. Functions as a Na(+)-independent transporter. Involved in the transport of nucleosides such as adenosine, guanosine, inosine, uridine, thymidine and cytidine. Also transports purine nucleobases (hypoxanthine, adenine, guanine) and pyrimidine nucleobases (thymine, uracil). Mediates basolateral nucleoside uptake into Sertoli cells, thereby regulating the transport of nucleosides in testis across the blood-testis barrier. Regulates inosine levels in brown adipocytes tissues (BAT) and extracellular inosine levels, which controls BAT-dependent energy expenditure. The chain is Equilibrative nucleoside transporter 1 from Homo sapiens (Human).